A 217-amino-acid polypeptide reads, in one-letter code: Ribonuclease T (217 aa).

The Exonuclease domain occupies 20–194 (VVIDVETGGF…YDTDRTAELF (175 aa)). Mg(2+) contacts are provided by aspartate 23, glutamate 25, histidine 181, and aspartate 186. Histidine 181 (proton donor/acceptor) is an active-site residue.

It belongs to the RNase T family. As to quaternary structure, homodimer. Mg(2+) serves as cofactor.

Its function is as follows. Trims short 3' overhangs of a variety of RNA species, leaving a one or two nucleotide 3' overhang. Responsible for the end-turnover of tRNA: specifically removes the terminal AMP residue from uncharged tRNA (tRNA-C-C-A). Also appears to be involved in tRNA biosynthesis. This Photorhabdus laumondii subsp. laumondii (strain DSM 15139 / CIP 105565 / TT01) (Photorhabdus luminescens subsp. laumondii) protein is Ribonuclease T.